Here is a 264-residue protein sequence, read N- to C-terminus: uncharacterized protein (264 aa).

The signal sequence occupies residues 1–23 (MQQWNLTISNILIGLFFCFSAQA).

This is an uncharacterized protein from Shewanella oneidensis (strain ATCC 700550 / JCM 31522 / CIP 106686 / LMG 19005 / NCIMB 14063 / MR-1).